Reading from the N-terminus, the 287-residue chain is Octanoyl-[GcvH]:protein N-octanoyltransferase (287 aa).

The 209-residue stretch at 45–253 (GESPATARSW…ELKELSGRLY (209 aa)) folds into the BPL/LPL catalytic domain. The Acyl-thioester intermediate role is filled by Cys150.

Belongs to the octanoyltransferase LipL family.

It catalyses the reaction N(6)-octanoyl-L-lysyl-[glycine-cleavage complex H protein] + L-lysyl-[lipoyl-carrier protein] = N(6)-octanoyl-L-lysyl-[lipoyl-carrier protein] + L-lysyl-[glycine-cleavage complex H protein]. Its pathway is protein modification; protein lipoylation via endogenous pathway; protein N(6)-(lipoyl)lysine from octanoyl-[acyl-carrier-protein]. Its function is as follows. Catalyzes the amidotransfer (transamidation) of the octanoyl moiety from octanoyl-GcvH to the lipoyl domain of the E2 subunit of lipoate-dependent enzymes. This Bacillus velezensis (strain DSM 23117 / BGSC 10A6 / LMG 26770 / FZB42) (Bacillus amyloliquefaciens subsp. plantarum) protein is Octanoyl-[GcvH]:protein N-octanoyltransferase.